Here is a 473-residue protein sequence, read N- to C-terminus: Photosystem II CP43 reaction center protein (473 aa).

Positions 1-14 (MKTLYSLRRFYPVE) are excised as a propeptide. At Thr-15 the chain carries N-acetylthreonine. Phosphothreonine is present on Thr-15. Transmembrane regions (helical) follow at residues 69 to 93 (LFEV…PHLA), 134 to 155 (LLGP…KDRN), 178 to 200 (KALY…RKIT), 255 to 275 (KPFA…LSYS), and 291 to 312 (WFNN…ASQA). Residue Glu-367 participates in [CaMn4O5] cluster binding. Residues 447–471 (RARAAAAGFEKGIDRDFEPVLSMTP) form a helical membrane-spanning segment.

The protein belongs to the PsbB/PsbC family. PsbC subfamily. In terms of assembly, PSII is composed of 1 copy each of membrane proteins PsbA, PsbB, PsbC, PsbD, PsbE, PsbF, PsbH, PsbI, PsbJ, PsbK, PsbL, PsbM, PsbT, PsbX, PsbY, PsbZ, Psb30/Ycf12, at least 3 peripheral proteins of the oxygen-evolving complex and a large number of cofactors. It forms dimeric complexes. The cofactor is Binds multiple chlorophylls and provides some of the ligands for the Ca-4Mn-5O cluster of the oxygen-evolving complex. It may also provide a ligand for a Cl- that is required for oxygen evolution. PSII binds additional chlorophylls, carotenoids and specific lipids..

The protein resides in the plastid. It localises to the chloroplast thylakoid membrane. Functionally, one of the components of the core complex of photosystem II (PSII). It binds chlorophyll and helps catalyze the primary light-induced photochemical processes of PSII. PSII is a light-driven water:plastoquinone oxidoreductase, using light energy to abstract electrons from H(2)O, generating O(2) and a proton gradient subsequently used for ATP formation. The polypeptide is Photosystem II CP43 reaction center protein (Populus trichocarpa (Western balsam poplar)).